The sequence spans 610 residues: Synaptotagmin-like protein 3 (610 aa).

The RabBD domain occupies 4 to 123; sequence EIDLSALKEL…IKTGEWFYEE (120 aa). Residues 219 to 239 form a disordered region; the sequence is RQCVGQTERRSQSDTAVNVTT. C2 domains follow at residues 306-428 and 462-603; these read VTGE…TQSF and RPRK…NLWT.

In terms of assembly, monomer. Binds NRXN1. Binds RAB27A that has been activated by GTP-binding via its N-terminus.

The protein localises to the endomembrane system. Functionally, may act as Rab effector protein and play a role in vesicle trafficking. Binds phospholipids in the presence of calcium ions. The sequence is that of Synaptotagmin-like protein 3 (SYTL3) from Homo sapiens (Human).